The following is a 211-amino-acid chain: Riboflavin kinase (211 aa).

An H-T-H motif-like region spans residues 1-85; it reads MKKILMLIEL…CDKISNALSK (85 aa). Positions 86 to 211 are riboflavin kinase; that stretch reads GVIVGEVVSG…GDRVRLEVIQ (126 aa). 95–100 contributes to the CDP binding site; that stretch reads GLGEGA. Mg(2+) is bound by residues Thr-122 and Asn-124. FMN-binding residues include Thr-178 and Glu-186. 191–194 provides a ligand contact to CDP; the sequence is VNLR.

It belongs to the archaeal riboflavin kinase family. Mg(2+) serves as cofactor.

It carries out the reaction riboflavin + CTP = CDP + FMN + H(+). It participates in cofactor biosynthesis; FMN biosynthesis; FMN from riboflavin (CTP route): step 1/1. In terms of biological role, catalyzes the CTP-dependent phosphorylation of riboflavin (vitamin B2) to form flavin mononucleotide (FMN). The protein is Riboflavin kinase (ribK) of Thermococcus kodakarensis (strain ATCC BAA-918 / JCM 12380 / KOD1) (Pyrococcus kodakaraensis (strain KOD1)).